The primary structure comprises 372 residues: Glutamate 5-kinase (372 aa).

Residue lysine 14 participates in ATP binding. Substrate is bound by residues serine 54, aspartate 141, and asparagine 153. 173-174 is a binding site for ATP; sequence TD. The region spanning 280–358 is the PUA domain; the sequence is RGHVVIDAGA…GEIEAVLGYM (79 aa).

It belongs to the glutamate 5-kinase family.

The protein resides in the cytoplasm. It catalyses the reaction L-glutamate + ATP = L-glutamyl 5-phosphate + ADP. The protein operates within amino-acid biosynthesis; L-proline biosynthesis; L-glutamate 5-semialdehyde from L-glutamate: step 1/2. In terms of biological role, catalyzes the transfer of a phosphate group to glutamate to form L-glutamate 5-phosphate. In Burkholderia thailandensis (strain ATCC 700388 / DSM 13276 / CCUG 48851 / CIP 106301 / E264), this protein is Glutamate 5-kinase.